The primary structure comprises 536 residues: Bicoumarin synthase desC (536 aa).

The chain crosses the membrane as a helical span at residues 12–32 (YVALAGITGFFLVFLGFLVVI). N-linked (GlcNAc...) asparagine glycosylation is found at asparagine 149 and asparagine 371. Cysteine 480 serves as a coordination point for heme.

This sequence belongs to the cytochrome P450 family. Heme is required as a cofactor.

It is found in the membrane. The catalysed reaction is 2 7-demethylsiderin + NADPH + O2 = desertorin A + NADP(+) + 2 H2O. It functions in the pathway secondary metabolite biosynthesis. Functionally, non-reducing polyketide synthase; part of the gene cluster that mediates the biosynthesis of the bicoumarin desertorin. The non-reducing polyketide synthase desS first catalyzes the formation of the pentaketidic 4,7-dihydroxy-5-methylcoumarin from acetyl coenzyme A and 4 malonyl coenzyme A molecules. Further O-methylation by desB leads to the formation of 7-demethylsiderin. Then, an oxidative phenol coupling catalyzed by the cytochrome P450 monooxygenase desC forms the 6,8'-dimer M-desertorin A via dimerization the monomeric precursor, 7-demethylsiderin. M-desertorin A is further converted to M-desertorin C. The polypeptide is Bicoumarin synthase desC (Aspergillus desertorum (Emericella desertorum)).